We begin with the raw amino-acid sequence, 247 residues long: Cell division protein ZapD (247 aa).

It belongs to the ZapD family. In terms of assembly, interacts with FtsZ.

The protein localises to the cytoplasm. Its function is as follows. Cell division factor that enhances FtsZ-ring assembly. Directly interacts with FtsZ and promotes bundling of FtsZ protofilaments, with a reduction in FtsZ GTPase activity. This chain is Cell division protein ZapD, found in Salmonella choleraesuis (strain SC-B67).